Consider the following 373-residue polypeptide: Methionine import ATP-binding protein MetN 1 (373 aa).

The region spanning 29-270 (ILIDRVRKVY…PRHEVTRRFV (242 aa)) is the ABC transporter domain. Residue 67–74 (GRSGAGKS) participates in ATP binding.

Belongs to the ABC transporter superfamily. Methionine importer (TC 3.A.1.24) family. The complex is composed of two ATP-binding proteins (MetN), two transmembrane proteins (MetI) and a solute-binding protein (MetQ).

It localises to the cell inner membrane. The catalysed reaction is L-methionine(out) + ATP + H2O = L-methionine(in) + ADP + phosphate + H(+). It catalyses the reaction D-methionine(out) + ATP + H2O = D-methionine(in) + ADP + phosphate + H(+). In terms of biological role, part of the ABC transporter complex MetNIQ involved in methionine import. Responsible for energy coupling to the transport system. The polypeptide is Methionine import ATP-binding protein MetN 1 (Rhodopseudomonas palustris (strain ATCC BAA-98 / CGA009)).